The following is a 204-amino-acid chain: LexA repressor (204 aa).

Residues 28 to 48 (VREIGEAVGLASSSTVHGHLD) constitute a DNA-binding region (H-T-H motif). Catalysis depends on for autocatalytic cleavage activity residues Ser126 and Lys164.

This sequence belongs to the peptidase S24 family. In terms of assembly, homodimer.

The catalysed reaction is Hydrolysis of Ala-|-Gly bond in repressor LexA.. Its function is as follows. Represses a number of genes involved in the response to DNA damage (SOS response), including recA and lexA. In the presence of single-stranded DNA, RecA interacts with LexA causing an autocatalytic cleavage which disrupts the DNA-binding part of LexA, leading to derepression of the SOS regulon and eventually DNA repair. The sequence is that of LexA repressor from Exiguobacterium sibiricum (strain DSM 17290 / CCUG 55495 / CIP 109462 / JCM 13490 / 255-15).